The primary structure comprises 216 residues: Uracil phosphoribosyltransferase (216 aa).

Residues Arg85, Arg110, and 135 to 143 (DPMVATGYS) contribute to the 5-phospho-alpha-D-ribose 1-diphosphate site. Uracil-binding positions include Ile200 and 205-207 (GDA). Asp206 contacts 5-phospho-alpha-D-ribose 1-diphosphate.

It belongs to the UPRTase family. Mg(2+) is required as a cofactor.

It carries out the reaction UMP + diphosphate = 5-phospho-alpha-D-ribose 1-diphosphate + uracil. It functions in the pathway pyrimidine metabolism; UMP biosynthesis via salvage pathway; UMP from uracil: step 1/1. With respect to regulation, allosterically activated by GTP. Functionally, catalyzes the conversion of uracil and 5-phospho-alpha-D-ribose 1-diphosphate (PRPP) to UMP and diphosphate. The protein is Uracil phosphoribosyltransferase of Paraburkholderia phytofirmans (strain DSM 17436 / LMG 22146 / PsJN) (Burkholderia phytofirmans).